The sequence spans 377 residues: Cytochrome b (377 aa).

4 consecutive transmembrane segments (helical) span residues 34–54, 78–100, 113–133, and 179–199; these read FGFL…FLSM, WLLR…IHIA, TWMT…LGYV, and FFTL…IHLL. Positions 84 and 98 each coordinate heme b. His-183 and His-197 together coordinate heme b. His-202 is an a ubiquinone binding site. The next 4 membrane-spanning stretches (helical) occupy residues 225-245, 288-308, 323-343, and 352-372; these read FTIK…ILVL, KLGG…LPLY, MLFW…AQAI, and QILT…SVLW.

The protein belongs to the cytochrome b family. In terms of assembly, the main subunits of complex b-c1 are: cytochrome b, cytochrome c1 and the Rieske protein. Heme b is required as a cofactor.

Its subcellular location is the mitochondrion inner membrane. Its function is as follows. Component of the ubiquinol-cytochrome c reductase complex (complex III or cytochrome b-c1 complex) that is part of the mitochondrial respiratory chain. The b-c1 complex mediates electron transfer from ubiquinol to cytochrome c. Contributes to the generation of a proton gradient across the mitochondrial membrane that is then used for ATP synthesis. The chain is Cytochrome b (mt:Cyt-b) from Priapulus caudatus (Priapulid worm).